The primary structure comprises 103 residues: Putative inactive recombination-promoting nuclease-like protein YjiP (103 aa).

It belongs to the Rpn/YhgA-like nuclease family.

Functionally, this pseudogene is the N-terminal fragment of low activity DNA endonuclease RpnD which probably yields 3'-hydroxyl ends. The intact protein can be seen in this entry (AC B7NGZ6). Expression of the repaired protein increases the frequency of recA-independent recombination, but also decreases viability probably via DNA damage; in a RecA strain expression has no effect on viability but does induce the SOS repair response. May play a role in horizontal gene transfer. This is Putative inactive recombination-promoting nuclease-like protein YjiP (yjiP) from Escherichia coli (strain K12).